A 263-amino-acid chain; its full sequence is Phosphatidylglycerol--prolipoprotein diacylglyceryl transferase (263 aa).

The next 4 helical transmembrane spans lie at 7–27 (IFSIGPVSIHWYSLAYVLGIV), 50–70 (LLTATIIGIILGGRLGFVLIY), 85–105 (TWKGGMSFHGGAIGVLCAVII), and 112–132 (IPIFYTLDLISCGVPIGLFLG). Position 133 (R133) interacts with a 1,2-diacyl-sn-glycero-3-phospho-(1'-sn-glycerol). A run of 3 helical transmembrane segments spans residues 169–189 (LYEAFFEGLLFFAIANSLFFL), 197–217 (GTLTGIAVIWYGTVRFVVEFF), and 233–253 (MGQLLSIFMTLLGIIVYLSAL).

Belongs to the Lgt family.

It is found in the cell membrane. The catalysed reaction is L-cysteinyl-[prolipoprotein] + a 1,2-diacyl-sn-glycero-3-phospho-(1'-sn-glycerol) = an S-1,2-diacyl-sn-glyceryl-L-cysteinyl-[prolipoprotein] + sn-glycerol 1-phosphate + H(+). The protein operates within protein modification; lipoprotein biosynthesis (diacylglyceryl transfer). Catalyzes the transfer of the diacylglyceryl group from phosphatidylglycerol to the sulfhydryl group of the N-terminal cysteine of a prolipoprotein, the first step in the formation of mature lipoproteins. In Wolbachia sp. subsp. Brugia malayi (strain TRS), this protein is Phosphatidylglycerol--prolipoprotein diacylglyceryl transferase.